Consider the following 208-residue polypeptide: Ras-related protein Rab-6A (208 aa).

Ser2 bears the N-acetylserine mark. GTP-binding residues include Ser23, Val24, Gly25, Lys26, Thr27, Ser28, Asp39, Asn40, Tyr42, and Thr45. Residue Thr27 coordinates Mg(2+). The short motif at 32–50 (RFMYDSFDNTYQATIGIDF) is the Switch 1 element. Mg(2+) contacts are provided by Thr45 and Asp68. Positions 69–88 (TAGQERFRSLIPSYIRDSTV) match the Switch 2 motif. Residue Gly71 coordinates GTP. Tyr82 bears the O-AMP-tyrosine; by Legionella DrrA mark. Positions 126, 127, 129, 156, 157, and 158 each coordinate GTP. Phosphoserine is present on Ser184. S-geranylgeranyl cysteine attachment occurs at residues Cys206 and Cys208. Cys208 bears the Cysteine methyl ester mark.

It belongs to the small GTPase superfamily. Rab family. In terms of assembly, interacts (GTP-bound) with DYNLRB1; the interaction is direct. Interacts with BICD1. Interacts with BICD2; the interaction is direct. Interacts (GTP-bound) with VPS13B. As to quaternary structure, interacts with BICD1. Interacts (GDP-bound) with DYNLRB1; the interaction is direct. Interacts (GTP-bound) with VPS13B. Interacts with BICDL1; leads to its accumulation in the pericentrosomal region. Interacts with SCYL1BP1. Interacts with VSP52. Interacts with RABGAP1. Interacts with GCC2 (via its GRIP domain). Interacts with RAB6IP1 (via its RUN 1 domain). Interacts with TMF1. Interacts with CIMAP3. Interacts (GTP-bound) with APBA1/MINT1 isoform 2, also called Mint1_826, but not with isoform 1. Interacts with RIC1; the interaction is direct with a preference for RAB6A-GDP. Interacts with RGP1; the interaction is direct with a preference for RAB6A-GDP. In terms of assembly, (Microbial infection) Interacts with human cytomegalovirus protein UL32. Requires Mg(2+) as cofactor. Post-translationally, prenylated. In terms of tissue distribution, ubiquitous.

The protein localises to the golgi apparatus membrane. Its subcellular location is the cytoplasmic vesicle. It localises to the secretory vesicle. It is found in the acrosome membrane. The enzyme catalyses GTP + H2O = GDP + phosphate + H(+). Regulated by guanine nucleotide exchange factors (GEFs) which promote the exchange of bound GDP for free GTP. Regulated by GTPase activating proteins (GAPs) which increase the GTP hydrolysis activity. Inhibited by GDP dissociation inhibitors (GDIs). Functionally, the small GTPases Rab are key regulators of intracellular membrane trafficking, from the formation of transport vesicles to their fusion with membranes. Rabs cycle between an inactive GDP-bound form and an active GTP-bound form that is able to recruit to membranes different sets of downstream effectors directly responsible for vesicle formation, movement, tethering and fusion. RAB6A acts as a regulator of COPI-independent retrograde transport from the Golgi apparatus towards the endoplasmic reticulum (ER). Has a low GTPase activity. Recruits VPS13B to the Golgi membrane. Plays a role in neuron projection development. This is Ras-related protein Rab-6A from Homo sapiens (Human).